The chain runs to 222 residues: TPR repeat-containing protein BH2049 (222 aa).

TPR repeat units lie at residues 34–67 and 169–202; these read AEPL…NREH and PVGL…KEDK.

The chain is TPR repeat-containing protein BH2049 from Halalkalibacterium halodurans (strain ATCC BAA-125 / DSM 18197 / FERM 7344 / JCM 9153 / C-125) (Bacillus halodurans).